Reading from the N-terminus, the 768-residue chain is Translation factor GUF1 homolog, mitochondrial (768 aa).

A mitochondrion-targeting transit peptide spans 1–29 (MRLWNRFSRLGNLLCACAACGCSFTPWRC). One can recognise a tr-type G domain in the interval 110–293 (SNIRNVAVVA…AIIERVPSPS (184 aa)). GTP is bound by residues 119 to 126 (AHVDHGKT), 184 to 188 (DTPGH), and 238 to 241 (TKMD).

This sequence belongs to the TRAFAC class translation factor GTPase superfamily. Classic translation factor GTPase family. LepA subfamily.

Its subcellular location is the mitochondrion inner membrane. It catalyses the reaction GTP + H2O = GDP + phosphate + H(+). Functionally, promotes mitochondrial protein synthesis. May act as a fidelity factor of the translation reaction, by catalyzing a one-codon backward translocation of tRNAs on improperly translocated ribosomes. Binds to mitochondrial ribosomes in a GTP-dependent manner. This Trypanosoma brucei brucei (strain 927/4 GUTat10.1) protein is Translation factor GUF1 homolog, mitochondrial.